The primary structure comprises 339 residues: Heat-inducible transcription repressor HrcA (339 aa).

This sequence belongs to the HrcA family.

Functionally, negative regulator of class I heat shock genes (grpE-dnaK-dnaJ and groELS operons). Prevents heat-shock induction of these operons. The polypeptide is Heat-inducible transcription repressor HrcA (Clostridium perfringens (strain SM101 / Type A)).